The chain runs to 758 residues: 3-isopropylmalate dehydratase (758 aa).

Residues cysteine 359, cysteine 420, and cysteine 423 each contribute to the [4Fe-4S] cluster site. Phosphoserine occurs at positions 486 and 488.

It belongs to the aconitase/IPM isomerase family. [4Fe-4S] cluster is required as a cofactor.

The enzyme catalyses (2R,3S)-3-isopropylmalate = (2S)-2-isopropylmalate. It functions in the pathway amino-acid biosynthesis; L-leucine biosynthesis; L-leucine from 3-methyl-2-oxobutanoate: step 2/4. Functionally, catalyzes the isomerization between 2-isopropylmalate and 3-isopropylmalate, via the formation of 2-isopropylmaleate. The protein is 3-isopropylmalate dehydratase (leu2) of Schizosaccharomyces pombe (strain 972 / ATCC 24843) (Fission yeast).